A 357-amino-acid chain; its full sequence is Alanine racemase (357 aa).

Lys-35 (proton acceptor; specific for D-alanine) is an active-site residue. The residue at position 35 (Lys-35) is an N6-(pyridoxal phosphate)lysine. Arg-131 provides a ligand contact to substrate. Catalysis depends on Tyr-256, which acts as the Proton acceptor; specific for L-alanine. Met-304 serves as a coordination point for substrate.

Belongs to the alanine racemase family. Pyridoxal 5'-phosphate is required as a cofactor.

The catalysed reaction is L-alanine = D-alanine. It participates in amino-acid biosynthesis; D-alanine biosynthesis; D-alanine from L-alanine: step 1/1. In terms of biological role, catalyzes the interconversion of L-alanine and D-alanine. May also act on other amino acids. In Legionella pneumophila (strain Lens), this protein is Alanine racemase (alr).